Consider the following 80-residue polypeptide: Serine protease inhibitor Kazal-type 1 (80 aa).

The N-terminal stretch at 1–23 (MKVAVIFLLSALALLSLAGNTFS) is a signal peptide. The Kazal-like domain maps to 27–80 (TGKEASCHDAVAGCPRIYDPVCGTDGITYANECVLCFENRKRIEPVLIRKGGPC). Cystine bridges form between Cys-33–Cys-62, Cys-40–Cys-59, and Cys-48–Cys-80.

In the genital tract, expressed only in male accessory glands including seminal vesicle, coagulating gland and prostate.

The protein localises to the secreted. In terms of biological role, serine protease inhibitor which exhibits anti-trypsin activity. In the pancreas, protects against trypsin-catalyzed premature activation of zymogens. In the male reproductive tract, binds to sperm heads where it modulates sperm capacitance by inhibiting calcium uptake and nitrogen oxide (NO) production. This Mus musculus (Mouse) protein is Serine protease inhibitor Kazal-type 1.